A 556-amino-acid chain; its full sequence is CTP synthase (556 aa).

Positions 1–266 (MKYIFVTGGV…GKVVEDLLGL (266 aa)) are amidoligase domain. Serine 12 contacts CTP. UTP is bound at residue serine 12. Position 13–18 (13–18 (SLGKGV)) interacts with ATP. Tyrosine 53 lines the L-glutamine pocket. ATP is bound at residue aspartate 70. Residues aspartate 70 and glutamate 140 each coordinate Mg(2+). Residues 147–149 (DIE), 187–192 (KTKPTQ), and lysine 223 contribute to the CTP site. UTP is bound by residues 187–192 (KTKPTQ) and lysine 223. Residues 291-544 (TIAIAGKYTE…VKAALRGQSS (254 aa)) enclose the Glutamine amidotransferase type-1 domain. Glycine 356 contacts L-glutamine. Cysteine 383 acts as the Nucleophile; for glutamine hydrolysis in catalysis. L-glutamine contacts are provided by residues 384-387 (LGMQ), glutamate 407, and arginine 467. Residues histidine 517 and glutamate 519 contribute to the active site.

It belongs to the CTP synthase family. In terms of assembly, homotetramer.

The enzyme catalyses UTP + L-glutamine + ATP + H2O = CTP + L-glutamate + ADP + phosphate + 2 H(+). The catalysed reaction is L-glutamine + H2O = L-glutamate + NH4(+). It catalyses the reaction UTP + NH4(+) + ATP = CTP + ADP + phosphate + 2 H(+). Its pathway is pyrimidine metabolism; CTP biosynthesis via de novo pathway; CTP from UDP: step 2/2. With respect to regulation, allosterically activated by GTP, when glutamine is the substrate; GTP has no effect on the reaction when ammonia is the substrate. The allosteric effector GTP functions by stabilizing the protein conformation that binds the tetrahedral intermediate(s) formed during glutamine hydrolysis. Inhibited by the product CTP, via allosteric rather than competitive inhibition. In terms of biological role, catalyzes the ATP-dependent amination of UTP to CTP with either L-glutamine or ammonia as the source of nitrogen. Regulates intracellular CTP levels through interactions with the four ribonucleotide triphosphates. This chain is CTP synthase, found in Deinococcus deserti (strain DSM 17065 / CIP 109153 / LMG 22923 / VCD115).